A 396-amino-acid polypeptide reads, in one-letter code: Elongation factor Tu 2 (396 aa).

In terms of domain architecture, tr-type G spans 10 to 206 (KPHINVGTIG…AMDAHIPQPE (197 aa)). The G1 stretch occupies residues 19–26 (GHVDHGKT). A GTP-binding site is contributed by 19-26 (GHVDHGKT). Thr26 lines the Mg(2+) pocket. The G2 stretch occupies residues 60 to 64 (GITIA). A G3 region spans residues 81-84 (DCPG). GTP-binding positions include 81 to 85 (DCPGH) and 136 to 139 (NKAD). Positions 136–139 (NKAD) are G4. Residues 174–176 (SAL) are G5.

Belongs to the TRAFAC class translation factor GTPase superfamily. Classic translation factor GTPase family. EF-Tu/EF-1A subfamily. In terms of assembly, monomer.

The protein resides in the cytoplasm. The catalysed reaction is GTP + H2O = GDP + phosphate + H(+). GTP hydrolase that promotes the GTP-dependent binding of aminoacyl-tRNA to the A-site of ribosomes during protein biosynthesis. The protein is Elongation factor Tu 2 of Halorhodospira halophila (strain DSM 244 / SL1) (Ectothiorhodospira halophila (strain DSM 244 / SL1)).